The primary structure comprises 371 residues: uncharacterized protein (371 aa).

Residues 43–148 (DESRVPKFYL…VQAFPTASNP (106 aa)) enclose the EH domain. The disordered stretch occupies residues 179–205 (SMRKKKESDSKEVSAHNSPAKGAAHDL).

This is an uncharacterized protein from Caenorhabditis elegans.